Here is a 157-residue protein sequence, read N- to C-terminus: Eukaryotic translation initiation factor 5A-1 (157 aa).

N-acetylserine is present on Ser-2. Ser-2 carries the phosphoserine modification. 2 positions are modified to phosphothreonine: Thr-7 and Thr-10. Residue Lys-51 is modified to Hypusine. Ser-74 carries the post-translational modification Phosphoserine. Residue Lys-86 forms a Glycyl lysine isopeptide (Lys-Gly) (interchain with G-Cter in ubiquitin) linkage.

The protein belongs to the eIF-5A family. In terms of assembly, homodimer. Binds to 80S ribosomes. Actively translating ribosomes show mutually exclusive binding of eIF5a (HYP2 or ANB1) and EFT1/eEF2. Interacts with DYS1 and LIA1. Post-translationally, lys-51 undergoes hypusination, a unique post-translational modification that consists in the addition of a butylamino group from spermidine to lysine side chain, leading to the formation of the unusual amino acid hypusine. eIF-5As are the only known proteins to undergo this modification, which is essential for their function.

The protein localises to the cytoplasm. In terms of biological role, translation factor that promotes translation elongation and termination, particularly upon ribosome stalling at specific amino acid sequence contexts. Binds between the exit (E) and peptidyl (P) site of the ribosome and promotes rescue of stalled ribosome: specifically required for efficient translation of polyproline-containing peptides as well as other motifs that stall the ribosome. Acts as a ribosome quality control (RQC) cofactor by joining the RQC complex to facilitate peptidyl transfer during CAT tailing step. Involved in actin dynamics and cell cycle progression, mRNA decay and probably in a pathway involved in stress response and maintenance of cell wall integrity. This chain is Eukaryotic translation initiation factor 5A-1 (HYP2), found in Saccharomyces cerevisiae (strain ATCC 204508 / S288c) (Baker's yeast).